A 97-amino-acid polypeptide reads, in one-letter code: Large ribosomal subunit protein bL27 (97 aa).

Residues 14 to 36 (HKKGGGSTSNGRDSQAKRLGAKA) form a disordered region.

The protein belongs to the bacterial ribosomal protein bL27 family.

In Streptococcus sanguinis (strain SK36), this protein is Large ribosomal subunit protein bL27.